Reading from the N-terminus, the 357-residue chain is Dynein axonemal assembly factor 10 (357 aa).

6 WD repeats span residues 63–105 (EKAK…VPVY), 115–154 (NTID…DPVA), 162–205 (ENKR…LRWE), 207–249 (NIKN…PTKG), 257–297 (AHKS…QRSK), and 319–357 (LSTQ…LHKI).

In terms of assembly, component of the PAQosome complex which is responsible for the biogenesis of several protein complexes and which consists of R2TP complex members RUVBL1, RUVBL2, RPAP3 and PIH1D1, URI complex members PFDN2, PFDN6, PDRG1, UXT and URI1 as well as ASDURF, POLR2E and DNAAF10/WDR92. Interacts with PIH1D1; the interaction associates DNAAF10 with the R2TP complex. Interacts with several dynein axonemal assembly factors.

The protein resides in the dynein axonemal particle. Its function is as follows. Key assembly factor specifically required for the stability of axonemal dynein heavy chains in cytoplasm. The polypeptide is Dynein axonemal assembly factor 10 (DNAAF10) (Bos taurus (Bovine)).